The following is a 516-amino-acid chain: Apolipoprotein N-acyltransferase (516 aa).

5 consecutive transmembrane segments (helical) span residues Ile23–Pro43, Ala68–Tyr88, Val94–Ala114, Trp135–Thr155, and Leu178–Leu198. The CN hydrolase domain occupies Ala241–Gln481. Catalysis depends on Glu279, which acts as the Proton acceptor. Lys339 is a catalytic residue. The Nucleophile role is filled by Cys391. Residues Phe489–Gly509 traverse the membrane as a helical segment.

Belongs to the CN hydrolase family. Apolipoprotein N-acyltransferase subfamily.

The protein localises to the cell inner membrane. It catalyses the reaction N-terminal S-1,2-diacyl-sn-glyceryl-L-cysteinyl-[lipoprotein] + a glycerophospholipid = N-acyl-S-1,2-diacyl-sn-glyceryl-L-cysteinyl-[lipoprotein] + a 2-acyl-sn-glycero-3-phospholipid + H(+). It functions in the pathway protein modification; lipoprotein biosynthesis (N-acyl transfer). Catalyzes the phospholipid dependent N-acylation of the N-terminal cysteine of apolipoprotein, the last step in lipoprotein maturation. The chain is Apolipoprotein N-acyltransferase from Chromobacterium violaceum (strain ATCC 12472 / DSM 30191 / JCM 1249 / CCUG 213 / NBRC 12614 / NCIMB 9131 / NCTC 9757 / MK).